The chain runs to 312 residues: Protease HtpX homolog (312 aa).

2 helical membrane passes run 6–26 (TAVL…AIGG) and 28–48 (GGMM…YWYA). His-130 is a binding site for Zn(2+). The active site involves Glu-131. Position 134 (His-134) interacts with Zn(2+). The next 2 membrane-spanning stretches (helical) occupy residues 145–165 (ITAS…FFGG) and 173–193 (PFGG…AMVV). Glu-202 is a binding site for Zn(2+). A compositionally biased stretch (low complexity) spans 287 to 297 (PAPARAAPARG). The disordered stretch occupies residues 287-312 (PAPARAAPARGPWGGNTGGTRRGPWG). The span at 298–312 (PWGGNTGGTRRGPWG) shows a compositional bias: gly residues.

Belongs to the peptidase M48B family. Requires Zn(2+) as cofactor.

The protein localises to the cell inner membrane. The chain is Protease HtpX homolog from Azorhizobium caulinodans (strain ATCC 43989 / DSM 5975 / JCM 20966 / LMG 6465 / NBRC 14845 / NCIMB 13405 / ORS 571).